Reading from the N-terminus, the 258-residue chain is MPSKKALVRRPSPRLAEGLVTHVEREKVDHGLALEQWDAYVEALGAHGWETLEVDPADDCPDSVFVEDAVVVFRNVALITRPGAESRRAETAGVEEAVARLGCSVNWVWEPGTLDGGDVLKIGDTIYVGRGGRTNAAGVQQLRAAFEPLGARVVAVPVSKVLHLKSAVTALPDGTVIGHIPLTDVPSLFPRFLPVPEESGAHVVLLGGSRLLMAASAPKTAELLADLGHEPVLVDIGEFEKLEGCVTCLSVRLRELYD.

Residues Leu-19, Asp-62, 67 to 68, Arg-87, and Arg-133 each bind substrate; that span reads ED. His-163 acts as the Proton donor in catalysis. The active-site Nucleophile is Cys-248.

This sequence belongs to the DDAH family.

It catalyses the reaction N(omega),N(omega)-dimethyl-L-arginine + H2O = dimethylamine + L-citrulline. The enzyme catalyses N(omega)-methyl-L-arginine + H2O = L-citrulline + methylamine. Hydrolyzes N(G),N(G)-dimethyl-L-arginine (ADMA) and N(G)-monomethyl-L-arginine (MMA). The protein is N(G),N(G)-dimethylarginine dimethylaminohydrolase (ddaH) of Streptomyces coelicolor (strain ATCC BAA-471 / A3(2) / M145).